Here is a 345-residue protein sequence, read N- to C-terminus: N-malonyltransferase FDB2 (345 aa).

The Acyl-thioester intermediate role is filled by C110. Residue H158 is the Proton acceptor of the active site. Residue D173 is part of the active site.

Belongs to the arylamine N-acetyltransferase family.

It participates in xenobiotic degradation. Its function is as follows. N-malonyltransferase; part of the Fusarium detoxification of benzoxazolinone cluster 2 (FDB2) involved in the degradation of benzoxazolinones produced by the host plant. Maize, wheat, and rye produce the 2 benzoxazinone phytoanticipins 2,4-dihy-droxy-7-methoxy-1,4-benzoxazin-3-one (DIMBOA) and 2,4-dihydroxy-1,4-benzoxazin-3-one (DIBOA) that, due to their inherent instability once released, spontaneously degrade to the more stable corresponding benzoxazolinones, 6-methoxy-2-benzoxazolinone (MBOA) and 2-benzoxazolinone (BOA), respectively. The first step in the detoxification of benzoxazolinones involves the hydrolysis of the cyclic ester bond of benzoxazolinones by the FDB1 cluster gamma-lactamase MBL1 to aminophenols. MBL1 is able to convert BOA into 2-aminophenol (2-AP), as well as MBOA into 5-methoxy-2-aminophenol (2-AMP). The FDB2 cluster N-malonyltransferase FDB2/NAT1 then metabolizes aminophenols via N-malonylation to non-toxic malonamic acids. FDB2/NAT1 converts 2-AP into N-(2-hydroxyphenyl) malonamic acid (HPMA) and 2-AMP into N-(2-hydroxy-4-methoxyphenyl) malonamic acid (HMPMA). The duplicated dienlactone hydrolases DLH1 and DLH2 may provide redundant function for hydrolyzing the lactone moiety in the BOA molecule. The roles of the amidases an other enzymes encoded by the 2 FDB clusters have not been identified so far. The chain is N-malonyltransferase FDB2 from Gibberella moniliformis (strain M3125 / FGSC 7600) (Maize ear and stalk rot fungus).